A 1559-amino-acid polypeptide reads, in one-letter code: Bile pigment transporter 1 (1559 aa).

Residues 1–29 (MSSLEVVDGCPYGYRPYPDSGTNALNPCF) are Vacuolar-facing. The chain crosses the membrane as a helical span at residues 30 to 50 (ISVISAWQAVFFLLIGSYQLW). Over 51 to 84 (KLYKNNKVPPRFKNFPTLPSKINSRHLTHLTNVC) the chain is Cytoplasmic. The chain crosses the membrane as a helical span at residues 85-105 (FQSTLIICELALVSQSSDRVY). Over 106-110 (PFILK) the chain is Vacuolar. Residues 111 to 127 (KALYLNLLFNLGISLPT) traverse the membrane as a helical segment. At 128–139 (QYLAYFKSTFSM) the chain is on the cytoplasmic side. The helical transmembrane segment at 140-160 (GNQLFYYMFQILLQLFLILQR) threads the bilayer. Over 161–178 (YYHGSSNERLTVISGQTA) the chain is Vacuolar. A helical membrane pass occupies residues 179-199 (MILEVLLLFNSVAIFIYDLCI). The Cytoplasmic segment spans residues 200–283 (FEPINELSEY…WLNRNSLWRA (84 aa)). The helical transmembrane segment at 284–304 (IWKSFGRTISVAMLYETTSDL) threads the bilayer. The ABC transmembrane type-1 1 domain maps to 292 to 578 (ISVAMLYETT…VPSMINTIIE (287 aa)). Over 305–333 (LSVVQPQFLRIFIDGLNPETSSKYPPLNG) the chain is Vacuolar. A helical transmembrane segment spans residues 334–354 (VFIALTLFVISVVSVFLTNQF). Over 355–410 (YIGIFEAGLGIRGSLASLVYQKSLRLTLAERNEKSTGDILNLMSVDVLRIQRFFEN) the chain is Cytoplasmic. A helical transmembrane segment spans residues 411-431 (AQTIIGAPIQIIVVLTSLYWL). Residues 432–434 (LGK) are Vacuolar-facing. A helical membrane pass occupies residues 435–455 (AVIGGLVTMAIMMPINAFLSR). At 456-518 (KVKKLSKTQM…NFRKIGIVSN (63 aa)) the chain is on the cytoplasmic side. The helical transmembrane segment at 519–539 (LIYFAWNCVPLMVTCSTFGLF) threads the bilayer. Residues 540–560 (SLFSDSPLSPAIVFPSLSLFN) lie on the Vacuolar side of the membrane. A helical transmembrane segment spans residues 561-581 (ILNSAIYSVPSMINTIIETSV). Residues 582-972 (SMERLKSFLL…VKTKIYLAYI (391 aa)) lie on the Cytoplasmic side of the membrane. Residues 639 to 871 (LRTDEESIIG…KNNTSKLKKL (233 aa)) form the ABC transporter 1 domain. At serine 645 the chain carries Phosphoserine. 672-679 (GRVGAGKS) lines the ATP pocket. Residues 877–899 (SPIDNGNESDVQTEHRSESEVDE) are disordered. Serine 885 is subject to Phosphoserine. The residue at position 889 (threonine 889) is a Phosphothreonine. Residues serine 893 and serine 895 each carry the phosphoserine modification. Threonine 916 carries the phosphothreonine modification. Phosphoserine occurs at positions 927 and 931. Threonine 934 is modified (phosphothreonine). A helical membrane pass occupies residues 973–993 (KACGVLGVVLFFLFMILTRVF). Residues 980–1265 (VVLFFLFMIL…IVRTTVTIET (286 aa)) form the ABC transmembrane type-1 2 domain. Residues 994–1030 (DLAENFWLKYWSESNEKNGSNERVWMFVGVYSLIGVA) lie on the Vacuolar side of the membrane. N-linked (GlcNAc...) asparagine glycosylation occurs at asparagine 1011. A helical transmembrane segment spans residues 1031-1052 (SAAFNNLRSIMMLLYCSIRGSK). Residues 1053–1095 (KLHESMAKSVIRSPMTFFETTPVGRIINRFSSDMDAVDSNLQY) lie on the Cytoplasmic side of the membrane. A helical transmembrane segment spans residues 1096-1116 (IFSFFFKSILTYLVTVILVGY). A topological domain (vacuolar) is located at residue asparagine 1117. A helical membrane pass occupies residues 1118-1138 (MPWFLVFNMFLVVIYIYYQTF). The Cytoplasmic segment spans residues 1139–1209 (YIVLSRELKR…STNRWLSVRL (71 aa)). The helical transmembrane segment at 1210 to 1230 (QTIGATIVLATAILALATMNT) threads the bilayer. The Vacuolar portion of the chain corresponds to 1231 to 1235 (KRQLS). Residues 1236–1256 (SGMVGLLMSYSLEVTGSLTWI) traverse the membrane as a helical segment. Residues 1257-1559 (VRTTVTIETN…SLCEKGGYLK (303 aa)) are Cytoplasmic-facing. Residues 1302–1553 (IEFKNYSTKY…KTSIFYSLCE (252 aa)) form the ABC transporter 2 domain. 1336-1343 (GRTGAGKS) provides a ligand contact to ATP. Over residues 1420–1433 (HLEKMLHSKPRGDD) the composition is skewed to basic and acidic residues. The interval 1420–1439 (HLEKMLHSKPRGDDSNEEDG) is disordered.

It belongs to the ABC transporter superfamily.

It localises to the vacuole membrane. Cooperates for the ATP-dependent vacuolar transport of bilirubin and glutathione conjugates. This chain is Bile pigment transporter 1 (BPT1), found in Saccharomyces cerevisiae (strain ATCC 204508 / S288c) (Baker's yeast).